The sequence spans 431 residues: Pheromone alpha factor receptor (431 aa).

Topologically, residues 1-49 are extracellular; the sequence is MSDAAPSLSNLFYDPTYNPGQSTINYTSIYGNGSTITFDELQGLVNSTV. Residues N25 and N32 are each glycosylated (N-linked (GlcNAc...) asparagine). Residues 50-72 form a helical membrane-spanning segment; that stretch reads TQAIMFGVRCGAAALTLIVMWMT. The short motif at 53 to 61 is the Glycine zipper motif element; sequence IMFGVRCGA. Residues 73 to 78 lie on the Cytoplasmic side of the membrane; it reads SRSRKT. Residues 79–102 form a helical membrane-spanning segment; the sequence is PIFIINQVSLFLIILHSALYFKYL. Topologically, residues 103–132 are extracellular; sequence LSNYSSVTYALTGFPQFISRGDVHVYGATN. A helical transmembrane segment spans residues 133–156; sequence IIQVLLVASIETSLVFQIKVIFTG. Residues 157–163 are Cytoplasmic-facing; the sequence is DNFKRIG. The helical transmembrane segment at 164–188 threads the bilayer; sequence LMLTSISFTLGIATVTMYFVSAVKG. Residues 189-205 lie on the Extracellular side of the membrane; it reads MIVTYNDVSATQDKYFN. A helical membrane pass occupies residues 206 to 230; that stretch reads ASTILLASSINFMSFVLVVKLILAI. Residues 231–241 are Cytoplasmic-facing; sequence RSRRFLGLKQF. A helical membrane pass occupies residues 242–266; it reads DSFHILLIMSCQSLLVPSIIFILAY. Over 267–275 the chain is Extracellular; sequence SLKPNQGTD. A helical membrane pass occupies residues 276 to 299; sequence VLTTVATLLAVLSLPLSSMWATAA. Over 300-431 the chain is Cytoplasmic; it reads NNASKTNTIT…KFWTEDNNNL (132 aa). S310 and S315 each carry phosphoserine. At T329 the chain carries Phosphothreonine. S331 carries the phosphoserine modification. K337 participates in a covalent cross-link: Glycyl lysine isopeptide (Lys-Gly) (interchain with G-Cter in ubiquitin). S360 is subject to Phosphoserine. Phosphothreonine is present on T363. S366 is subject to Phosphoserine. A Glycyl lysine isopeptide (Lys-Gly) (interchain with G-Cter in ubiquitin) cross-link involves residue K374. Residues 379-389 are compositionally biased toward polar residues; sequence QLPTPTSSKNT. The tract at residues 379–406 is disordered; it reads QLPTPTSSKNTRIGPFADASYKEGEVEP. T382 bears the Phosphothreonine mark. Residues S385 and S386 each carry the phosphoserine modification. Residue K400 forms a Glycyl lysine isopeptide (Lys-Gly) (interchain with G-Cter in ubiquitin) linkage. 2 positions are modified to phosphothreonine: T411 and T414. Residue K422 forms a Glycyl lysine isopeptide (Lys-Gly) (interchain with G-Cter in ubiquitin) linkage.

It belongs to the G-protein coupled receptor 4 family. In terms of assembly, homodimer. Might also for higher order homooligomers such as homotetramers. Oligomerization is mediated significantly by transmembrane domain 1 (TMD1), possibly in concert with the N-terminal extracellular domain and TMD2. Interaction with GPA1, its dedicated G-alpha protein. Post-translationally, undergoes hyperphosphorylation of the C-terminal cytoplasmic domain after binding of the alpha-factor, which leads to internalization by endocytosis. Monoubiquitination at Lys-337 triggers internalization of STE2. In terms of processing, N-glycosylated. N-glycosylation may be involved in the sorting process for misfolded STE2 protein. In terms of tissue distribution, expressed in MATa strains but not in MATalpha strains.

The protein localises to the cell membrane. Fungal class D1 G-protein-coupled receptor that acts as an alpha-factor pheromone receptor performing pheromone-dependent signal transduction involved in cellular conjugation, mating projection assembly, and in cell fusion. Following alpha-factor-binding, the signal is transmitted via a tripartite G protein consisting of alpha-, beta- and gamma-subunits (GAP1, STE4 and STE8 respectively) that prepares the cell for conjugation. In the inactive state, the cytoplasmic end of transmembrane domain 7 (TMD7) is unstructured and packs between TMD1-6, blocking the G protein coupling site. Agonist binding results in the outward movement of the extracellular ends of TMD6 and TMD7 by 6 Angstroms. On the intracellular surface, the G protein coupling site is formed by a 20 Angstroms outward movement of the unstructured region in TMD7 that unblocks the site, and a 12 Angstroms inward movement of TMD6. In Saccharomyces cerevisiae (strain ATCC 204508 / S288c) (Baker's yeast), this protein is Pheromone alpha factor receptor (STE2).